We begin with the raw amino-acid sequence, 470 residues long: Light-independent protochlorophyllide reductase subunit N (470 aa).

[4Fe-4S] cluster-binding residues include Cys23, Cys48, and Cys108.

The protein belongs to the BchN/ChlN family. In terms of assembly, protochlorophyllide reductase is composed of three subunits; ChlL, ChlN and ChlB. Forms a heterotetramer of two ChlB and two ChlN subunits. [4Fe-4S] cluster serves as cofactor.

The protein localises to the plastid. Its subcellular location is the chloroplast. The enzyme catalyses chlorophyllide a + oxidized 2[4Fe-4S]-[ferredoxin] + 2 ADP + 2 phosphate = protochlorophyllide a + reduced 2[4Fe-4S]-[ferredoxin] + 2 ATP + 2 H2O. The protein operates within porphyrin-containing compound metabolism; chlorophyll biosynthesis (light-independent). Its function is as follows. Component of the dark-operative protochlorophyllide reductase (DPOR) that uses Mg-ATP and reduced ferredoxin to reduce ring D of protochlorophyllide (Pchlide) to form chlorophyllide a (Chlide). This reaction is light-independent. The NB-protein (ChlN-ChlB) is the catalytic component of the complex. This Zygnema circumcarinatum (Green alga) protein is Light-independent protochlorophyllide reductase subunit N.